We begin with the raw amino-acid sequence, 415 residues long: F-box protein At3g13820 (415 aa).

The 50-residue stretch at 1 to 50 folds into the F-box domain; it reads MTTMSNLPAEVLEEILSRTPVTSLRTMRSTCKKWNNLSKKKIIPEAARKQ. Disordered regions lie at residues 209–229 and 387–415; these read NDYDDQEDEEEEDDEEYEDDD and KQPKGKRKGRSSETKSNKNKKGRKIKIIG. Positions 210-229 are enriched in acidic residues; sequence DYDDQEDEEEEDDEEYEDDD. The span at 403–415 shows a compositional bias: basic residues; the sequence is NKNKKGRKIKIIG.

This is F-box protein At3g13820 from Arabidopsis thaliana (Mouse-ear cress).